The primary structure comprises 491 residues: Probable malate:quinone oxidoreductase (491 aa).

This sequence belongs to the MQO family. FAD serves as cofactor.

The enzyme catalyses (S)-malate + a quinone = a quinol + oxaloacetate. It participates in carbohydrate metabolism; tricarboxylic acid cycle; oxaloacetate from (S)-malate (quinone route): step 1/1. The polypeptide is Probable malate:quinone oxidoreductase (Leifsonia xyli subsp. xyli (strain CTCB07)).